A 414-amino-acid chain; its full sequence is uncharacterized protein (414 aa).

3 disordered regions span residues 136-168 (SSKS…TVPT), 298-322 (KNFP…SYHR), and 350-382 (PPHS…MSTS).

This is an uncharacterized protein from Macaca fascicularis (Crab-eating macaque).